The sequence spans 420 residues: Tyrosine--tRNA ligase (420 aa).

Residue Y33 coordinates L-tyrosine. Positions 38–47 (PTADSLHVGH) match the 'HIGH' region motif. 2 residues coordinate L-tyrosine: Y167 and Q171. Positions 227 to 231 (KFGKT) match the 'KMSKS' region motif. Position 230 (K230) interacts with ATP. One can recognise an S4 RNA-binding domain in the interval 353–419 (LTVADLLVKV…GKRNYALVKV (67 aa)).

This sequence belongs to the class-I aminoacyl-tRNA synthetase family. TyrS type 1 subfamily. In terms of assembly, homodimer.

It localises to the cytoplasm. The enzyme catalyses tRNA(Tyr) + L-tyrosine + ATP = L-tyrosyl-tRNA(Tyr) + AMP + diphosphate + H(+). Functionally, catalyzes the attachment of tyrosine to tRNA(Tyr) in a two-step reaction: tyrosine is first activated by ATP to form Tyr-AMP and then transferred to the acceptor end of tRNA(Tyr). The sequence is that of Tyrosine--tRNA ligase from Anaeromyxobacter dehalogenans (strain 2CP-C).